We begin with the raw amino-acid sequence, 48 residues long: Large ribosomal subunit protein bL32 (48 aa).

Positions methionine 1–tyrosine 20 are enriched in basic residues. The segment at methionine 1–tyrosine 48 is disordered.

This sequence belongs to the bacterial ribosomal protein bL32 family.

This Campylobacter jejuni subsp. doylei (strain ATCC BAA-1458 / RM4099 / 269.97) protein is Large ribosomal subunit protein bL32.